The chain runs to 426 residues: Enolase (426 aa).

Residues 38–60 (PSGASTGAHEAVEKRDGDKSRYG) are disordered. Residues 47-58 (EAVEKRDGDKSR) show a composition bias toward basic and acidic residues. Q163 is a binding site for (2R)-2-phosphoglycerate. The active-site Proton donor is the E205. Mg(2+) is bound by residues D242, E285, and D312. (2R)-2-phosphoglycerate contacts are provided by K337, R366, S367, and K388. The active-site Proton acceptor is the K337.

Belongs to the enolase family. It depends on Mg(2+) as a cofactor.

The protein localises to the cytoplasm. The protein resides in the secreted. It is found in the cell surface. It carries out the reaction (2R)-2-phosphoglycerate = phosphoenolpyruvate + H2O. The protein operates within carbohydrate degradation; glycolysis; pyruvate from D-glyceraldehyde 3-phosphate: step 4/5. Functionally, catalyzes the reversible conversion of 2-phosphoglycerate (2-PG) into phosphoenolpyruvate (PEP). It is essential for the degradation of carbohydrates via glycolysis. This chain is Enolase, found in Caulobacter sp. (strain K31).